A 218-amino-acid polypeptide reads, in one-letter code: MKLNFKGFFKAAGLFPLALMLSGCISYALVSHTAKGSSGKYQSQSDTITGLSQAKDSNGTKGYVFVGESLDYLITDGADDIVKMLNDPALNRHNIQVADDARFVLNAGKKKFTGTISLYYYWNNEEEKALATHYGFACGVQHCTRSLENLKGTIHEKNKNMDYSKVMAFYHPFKVRFYEYYSPRGIPDGVSAALLPVTVTLDIITAPLQFLVVYAVNQ.

Residues 11 to 31 (AAGLFPLALMLSGCISYALVS) traverse the membrane as a helical segment.

It is found in the membrane. This is an uncharacterized protein from Escherichia coli (strain K12).